A 211-amino-acid polypeptide reads, in one-letter code: Octanoyltransferase (211 aa).

Residues 32–207 (PCTYDEIWFV…ELSKFLEIFI (176 aa)) form the BPL/LPL catalytic domain. Residues 71–78 (RGGQITYH), 138–140 (SLG), and 151–153 (GLA) contribute to the substrate site. Catalysis depends on cysteine 169, which acts as the Acyl-thioester intermediate.

It belongs to the LipB family.

It localises to the cytoplasm. The enzyme catalyses octanoyl-[ACP] + L-lysyl-[protein] = N(6)-octanoyl-L-lysyl-[protein] + holo-[ACP] + H(+). It functions in the pathway protein modification; protein lipoylation via endogenous pathway; protein N(6)-(lipoyl)lysine from octanoyl-[acyl-carrier-protein]: step 1/2. Catalyzes the transfer of endogenously produced octanoic acid from octanoyl-acyl-carrier-protein onto the lipoyl domains of lipoate-dependent enzymes. Lipoyl-ACP can also act as a substrate although octanoyl-ACP is likely to be the physiological substrate. The polypeptide is Octanoyltransferase (Buchnera aphidicola subsp. Acyrthosiphon pisum (strain APS) (Acyrthosiphon pisum symbiotic bacterium)).